A 326-amino-acid polypeptide reads, in one-letter code: DNA-binding death effector domain-containing protein 2 (326 aa).

The 80-residue stretch at 25–104 folds into the DED domain; the sequence is SLHRMFEVVG…RHDLLPHLAR (80 aa). Positions 104-109 match the Nuclear localization signal motif; it reads RKRRRP. Residues 104–194 form a disordered region; it reads RKRRRPVSPE…PARPSSEGKV (91 aa). The segment covering 136 to 146 has biased composition (low complexity); it reads SSSSANSQQGQ. The Bipartite nuclear localization signal signature appears at 155–173; it reads KRQRRSRGRPSGGARRRRR. A compositionally biased stretch (basic residues) spans 155–174; that stretch reads KRQRRSRGRPSGGARRRRRG. Residues 175 to 191 are compositionally biased toward low complexity; that stretch reads APAAPQQQSEPARPSSE.

In terms of assembly, interacts with CASP8, CASP10 and GTF3C3. Homodimerizes and heterodimerizes with DEDD. In terms of tissue distribution, expressed in most tissues. High levels were found in liver, kidney, heart, ovary, spleen, testes, skeletal muscle and peripheral blood leukocytes. Expression was absent or low in colon and small intestine. Expression is relatively high in the tumor cell lines chronic myologenous leukemia K-562 and the colorectal adenocarcinoma SW480. Expression is moderate in the cervical carcinoma HeLa, the Burkitt's lymphoma Raji, the lung carcinoma A-549, and the melanoma G-361. In contrast, two leukemia cell lines, HL-60 (promyelocytic leukemia) and MOLT-4 (lymphoblastic leukemia), show relatively low levels.

The protein resides in the nucleus. It localises to the nucleolus. In terms of biological role, may play a critical role in death receptor-induced apoptosis and may target CASP8 and CASP10 to the nucleus. May regulate degradation of intermediate filaments during apoptosis. May play a role in the general transcription machinery in the nucleus and might be an important regulator of the activity of GTF3C3. The chain is DNA-binding death effector domain-containing protein 2 (DEDD2) from Homo sapiens (Human).